The sequence spans 225 residues: NAD(P)H-quinone oxidoreductase subunit K, chloroplastic (225 aa).

C43, C44, C108, and C139 together coordinate [4Fe-4S] cluster.

The protein belongs to the complex I 20 kDa subunit family. In terms of assembly, NDH is composed of at least 16 different subunits, 5 of which are encoded in the nucleus. The cofactor is [4Fe-4S] cluster.

Its subcellular location is the plastid. It is found in the chloroplast thylakoid membrane. It catalyses the reaction a plastoquinone + NADH + (n+1) H(+)(in) = a plastoquinol + NAD(+) + n H(+)(out). The catalysed reaction is a plastoquinone + NADPH + (n+1) H(+)(in) = a plastoquinol + NADP(+) + n H(+)(out). In terms of biological role, NDH shuttles electrons from NAD(P)H:plastoquinone, via FMN and iron-sulfur (Fe-S) centers, to quinones in the photosynthetic chain and possibly in a chloroplast respiratory chain. The immediate electron acceptor for the enzyme in this species is believed to be plastoquinone. Couples the redox reaction to proton translocation, and thus conserves the redox energy in a proton gradient. The polypeptide is NAD(P)H-quinone oxidoreductase subunit K, chloroplastic (Draba nemorosa (Woodland whitlowgrass)).